Reading from the N-terminus, the 486-residue chain is CUGBP Elav-like family member 4 (486 aa).

Positions 1–298 are sufficient for RNA-binding and MSE-dependent splicing activity; that stretch reads MYIKMATLAN…AAFAAAQMQQ (298 aa). Residues 18 to 28 show a composition bias toward polar residues; the sequence is LSTNGLGSSPG. Disordered regions lie at residues 18–39 and 121–149; these read LSTN…LSHS and LPGM…QPPS. In terms of domain architecture, RRM 1 spans 54 to 135; the sequence is IKLFIGQIPR…RPIQVKPADS (82 aa). The span at 138–149 shows a compositional bias: polar residues; it reads RGGSSCLRQPPS. One can recognise an RRM 2 domain in the interval 152–232; that stretch reads RKLFVGMLNK…SSLVVKFADT (81 aa). Residues 239–258 form a necessary for TNNT2 exon 5 inclusion region; that stretch reads RRMQQMAGQMGMFNPMAIPF. Residues 404 to 479 enclose the RRM 3 domain; sequence PQPPPMIPQQ…KRLKVQLKRP (76 aa).

Belongs to the CELF/BRUNOL family. In terms of tissue distribution, ubiquitous. Strongly expressed in the cerebellum, hippocampus, amygdala, temporal and frontal cortex and frontal lobes.

Its subcellular location is the nucleus. The protein localises to the cytoplasm. In terms of biological role, RNA-binding protein implicated in the regulation of pre-mRNA alternative splicing. Mediates exon inclusion and/or exclusion in pre-mRNA that are subject to tissue-specific and developmentally regulated alternative splicing. Specifically activates exon 5 inclusion of cardiac isoforms of TNNT2 during heart remodeling at the juvenile to adult transition. Promotes exclusion of both the smooth muscle (SM) and non-muscle (NM) exons in actinin pre-mRNAs. Activates the splicing of MAPT/Tau exon 10. Binds to muscle-specific splicing enhancer (MSE) intronic sites flanking the alternative exon 5 of TNNT2 pre-mRNA. The polypeptide is CUGBP Elav-like family member 4 (CELF4) (Homo sapiens (Human)).